The chain runs to 58 residues: UPF0337 protein OB2685 (58 aa).

2 stretches are compositionally biased toward basic and acidic residues: residues 1–22 (MSDG…EAKD) and 30–46 (DPQR…KGEA). The disordered stretch occupies residues 1–58 (MSDGMKDKAKAIGKKIKGEAKDQWGSATDDPQRKAEGKRDKAKGEAQDTIADAKNNNK).

This sequence belongs to the UPF0337 (CsbD) family.

In Oceanobacillus iheyensis (strain DSM 14371 / CIP 107618 / JCM 11309 / KCTC 3954 / HTE831), this protein is UPF0337 protein OB2685.